Reading from the N-terminus, the 163-residue chain is Small ribosomal subunit protein uS5 (163 aa).

In terms of domain architecture, S5 DRBM spans 8 to 71; that stretch reads FIEKVVSLNR…EQARKAMMKI (64 aa).

This sequence belongs to the universal ribosomal protein uS5 family. Part of the 30S ribosomal subunit. Contacts proteins S4 and S8.

Its function is as follows. With S4 and S12 plays an important role in translational accuracy. In terms of biological role, located at the back of the 30S subunit body where it stabilizes the conformation of the head with respect to the body. The sequence is that of Small ribosomal subunit protein uS5 from Lawsonia intracellularis (strain PHE/MN1-00).